The chain runs to 174 residues: RNA pyrophosphohydrolase (174 aa).

Residues 6 to 149 (GFRANVGIII…KRDVYRKVMK (144 aa)) form the Nudix hydrolase domain. The Nudix box signature appears at 38–59 (GGVDDGESAEEAMYRELYEEVG).

Belongs to the Nudix hydrolase family. RppH subfamily. Requires a divalent metal cation as cofactor.

In terms of biological role, accelerates the degradation of transcripts by removing pyrophosphate from the 5'-end of triphosphorylated RNA, leading to a more labile monophosphorylated state that can stimulate subsequent ribonuclease cleavage. This is RNA pyrophosphohydrolase from Shewanella sp. (strain W3-18-1).